The primary structure comprises 252 residues: Isoprenyl transferase (252 aa).

Aspartate 32 is an active-site residue. Aspartate 32 contacts Mg(2+). Residues 33 to 36, tryptophan 37, arginine 45, histidine 49, and 77 to 79 each bind substrate; these read GNGR and STE. Asparagine 80 (proton acceptor) is an active-site residue. Residues tryptophan 81, arginine 83, arginine 200, and 206–208 contribute to the substrate site; that span reads RLS. Glutamate 219 serves as a coordination point for Mg(2+).

It belongs to the UPP synthase family. As to quaternary structure, homodimer. Requires Mg(2+) as cofactor.

In terms of biological role, catalyzes the condensation of isopentenyl diphosphate (IPP) with allylic pyrophosphates generating different type of terpenoids. This chain is Isoprenyl transferase, found in Listeria monocytogenes serovar 1/2a (strain ATCC BAA-679 / EGD-e).